The following is a 98-amino-acid chain: NADH-ubiquinone oxidoreductase chain 4L (98 aa).

Transmembrane regions (helical) follow at residues 1 to 21 (MPLIHINIMMAFIMSLVGLLM), 29 to 49 (ALLCLEGMMLSLFILTALLAL), and 61 to 81 (IILLVFAACEAAIGLALLVMI).

Belongs to the complex I subunit 4L family. In terms of assembly, core subunit of respiratory chain NADH dehydrogenase (Complex I) which is composed of 45 different subunits.

The protein localises to the mitochondrion inner membrane. It carries out the reaction a ubiquinone + NADH + 5 H(+)(in) = a ubiquinol + NAD(+) + 4 H(+)(out). Its function is as follows. Core subunit of the mitochondrial membrane respiratory chain NADH dehydrogenase (Complex I) which catalyzes electron transfer from NADH through the respiratory chain, using ubiquinone as an electron acceptor. Part of the enzyme membrane arm which is embedded in the lipid bilayer and involved in proton translocation. This is NADH-ubiquinone oxidoreductase chain 4L (MT-ND4L) from Kogia breviceps (Pygmy sperm whale).